Here is a 191-residue protein sequence, read N- to C-terminus: Protein Ves (191 aa).

Belongs to the Ves family.

This chain is Protein Ves, found in Escherichia coli (strain SE11).